The following is a 431-amino-acid chain: MSTSSSAVSQLKNSPLAGNINYEPTVWSRADALKVNENDPTTTQPLVSADFPVMSDTVFIWDTMPLRELDGTVVSVNGWSVILTLTADRHPNDPQYLDANGRYDIKRDWEDRHGRARMSYWYSRTGKDWIFGGRVMAEGVSPTTREWAGTPILLNDKGDIDLYYTCVTPGAAIAKVRGRIVTSDQGVELKDFTQVKKLFEADGTYYQTEAQNSSWNFRDPSPFIDPNDGKLYMVFEGNVAGERGSHTVGAAELGPVPPGHEDVGGARFQVGCIGLAVAKDLSGEEWEILPPLVTAVGVNDQTERPHYVFQDGKYYLFTISHKFTYAEGLTGPDGVYGFVGEHLFGPYRPMNASGLVLGNPPEQPFQTYSHCVMPNGLVTSFIDSVPTEGEDYRIGGTEAPTVRILLKGDRSFVQEEYDYGYIPAMKDVTLS.

Positions 61, 62, 148, 218, and 219 each coordinate sucrose. Aspartate 62 (nucleophile) is an active-site residue. The Proton donor/acceptor role is filled by glutamate 303.

Belongs to the glycosyl hydrolase 68 family.

Its subcellular location is the secreted. The catalysed reaction is [6)-beta-D-fructofuranosyl-(2-&gt;](n) alpha-D-glucopyranoside + sucrose = [6)-beta-D-fructofuranosyl-(2-&gt;](n+1) alpha-D-glucopyranoside + D-glucose. Its function is as follows. Catalyzes the synthesis of levan, a fructose polymer, by transferring the fructosyl moiety from sucrose to a growing acceptor molecule. In Pseudomonas savastanoi pv. glycinea (Pseudomonas syringae pv. glycinea), this protein is Levansucrase LscB.